We begin with the raw amino-acid sequence, 307 residues long: Elongation factor Ts (307 aa).

The segment at Thr79–Val82 is involved in Mg(2+) ion dislocation from EF-Tu.

This sequence belongs to the EF-Ts family.

The protein resides in the cytoplasm. Associates with the EF-Tu.GDP complex and induces the exchange of GDP to GTP. It remains bound to the aminoacyl-tRNA.EF-Tu.GTP complex up to the GTP hydrolysis stage on the ribosome. The protein is Elongation factor Ts of Bartonella bacilliformis (strain ATCC 35685 / KC583 / Herrer 020/F12,63).